Consider the following 469-residue polypeptide: Cold shock protein CS66 (469 aa).

Repeat copies occupy residues 9 to 31 (GEKKGIMEKIKEKLPGGHGDHKE), 49 to 62 (TGGAYGQEGHTGTT), 72 to 94 (GEKKGVMENIKDKLPGGHADHQQ), 95 to 108 (TGGTYGQQGHTGTA), 115 to 128 (TGGTYGQQGHTGTA), 135 to 148 (TNGTYGEHGHTGTA), 149 to 162 (TGGSYGEQRHTGVT), 170 to 192 (GEKKSLMENIKEKLPGGHGDNQQ), 193 to 206 (TAGTYGQQGHFATG), 213 to 226 (TGGTYGEQGHAGVT), 234 to 256 (GEKKGLMENIKDKLPGGHGDHQQ), 257 to 270 (TGGTYGQQGHTGAA), 277 to 290 (GGGTYEQHGHTGMT), 298 to 320 (GGKKGVMENIKDKLPGGHSDNQQ), 321 to 334 (TGGAYEQQGHTGAA), 341 to 354 (SGGTYEQHGHTGMT), 362 to 384 (GEKKAVMENIKDKLPGGHGDHQQ), 385 to 398 (TGGAYGQQGHTGTA), 405 to 418 (GGGTYEQHGNTGMT), 428 to 441 (TGGTHGQHGHTGTT), and 452 to 469 (GEKKSLMDKIKDKLPGQH). The segment at 9–390 (GEKKGIMEKI…DHQQTGGAYG (382 aa)) is 7 X 23 AA approximate repeats. A 14 X 14 AA approximate repeats region spans residues 49 to 441 (TGGAYGQEGH…HGQHGHTGTT (393 aa)). The segment at 87–112 (GGHADHQQTGGTYGQQGHTGTATHGT) is disordered. Low complexity predominate over residues 93–112 (QQTGGTYGQQGHTGTATHGT). Low complexity predominate over residues 203–214 (FATGTHGTPATG). Residues 203 to 469 (FATGTHGTPA…KIKDKLPGQH (267 aa)) form a disordered region. Residues 233 to 254 (TGEKKGLMENIKDKLPGGHGDH) are compositionally biased toward basic and acidic residues. Residues 255-274 (QQTGGTYGQQGHTGAATHGT) show a composition bias toward low complexity. Gly residues predominate over residues 288 to 301 (GMTGTGTHGTGGKK). The span at 302-312 (GVMENIKDKLP) shows a compositional bias: basic and acidic residues. Over residues 361 to 382 (TGEKKAVMENIKDKLPGGHGDH) the composition is skewed to basic and acidic residues. Composition is skewed to low complexity over residues 383–402 (QQTGGAYGQQGHTGTATHGT) and 412–429 (HGNTGMTGTETHGTTATG). The span at 439–450 (GTTGTGTHGTDG) shows a compositional bias: gly residues. The segment covering 451-469 (VGEKKSLMDKIKDKLPGQH) has biased composition (basic and acidic residues).

The protein belongs to the plant dehydrin family.

In terms of biological role, may reduce intracellular freezing damage during winter by hydrogen-bonding to the lattice of the nascent ice crystals, thus modifying the structure and/or propagation of ice crystals. In Triticum aestivum (Wheat), this protein is Cold shock protein CS66 (CS66).